The sequence spans 175 residues: Beta-carotene hydroxylase (175 aa).

In terms of domain architecture, Fatty acid hydroxylase spans 11 to 136 (FVTVIGMEVI…RGKEGCVSFG (126 aa)).

This sequence belongs to the sterol desaturase family.

The enzyme catalyses all-trans-beta-carotene + 4 reduced [2Fe-2S]-[ferredoxin] + 2 O2 + 4 H(+) = all-trans-zeaxanthin + 4 oxidized [2Fe-2S]-[ferredoxin] + 2 H2O. The protein operates within carotenoid biosynthesis; zeaxanthin biosynthesis. Its function is as follows. Catalyzes the hydroxylation reaction from beta-carotene to zeaxanthin. The polypeptide is Beta-carotene hydroxylase (crtZ) (Pantoea ananas (Erwinia uredovora)).